We begin with the raw amino-acid sequence, 234 residues long: Glycerol uptake facilitator protein (234 aa).

The next 6 membrane-spanning stretches (helical) occupy residues 9–29 (FLGTLILILLGNGVVAGVVLP), 37–57 (GWIVITMGWGIAVAVAVFVSG), 61–81 (PAYLNPAVTIGVALKGGLPWA), 83–103 (VLPYILAQFAGAMLGQILVWL), 135–155 (LISEILGTFVLVLTIFALGLY), and 159–179 (AGIGTFAVGTLIVGIGLSLGG). The NPA 1 signature appears at 65-67 (NPA). Positions 186 to 188 (NPA) match the NPA 2 motif. Residues 214-234 (WIPVVGPVIGAALAVLVFSLF) form a helical membrane-spanning segment.

It belongs to the MIP/aquaporin (TC 1.A.8) family.

It localises to the cell membrane. It carries out the reaction glycerol(in) = glycerol(out). Mediates glycerol diffusion across the cytoplasmic membrane via a pore-type mechanism. This is Glycerol uptake facilitator protein (glpF) from Streptococcus pneumoniae serotype 4 (strain ATCC BAA-334 / TIGR4).